A 61-amino-acid chain; its full sequence is MAVPKRKKSKSRRNMHRSHCRLRVPNIGIDKTTGEYKLSHHICLGGYYNEKQVLEVDTSGV.

The protein belongs to the bacterial ribosomal protein bL32 family.

This is Large ribosomal subunit protein bL32 from Ehrlichia canis (strain Jake).